We begin with the raw amino-acid sequence, 110 residues long: NADH-quinone oxidoreductase subunit K (110 aa).

The next 3 membrane-spanning stretches (helical) occupy residues 14-34, 39-59, and 70-90; these read VSQY…GMMV, ITIL…FVGI, and IFAL…LGII.

Belongs to the complex I subunit 4L family. In terms of assembly, NDH-1 is composed of 14 different subunits. Subunits NuoA, H, J, K, L, M, N constitute the membrane sector of the complex.

It localises to the cell inner membrane. The catalysed reaction is a quinone + NADH + 5 H(+)(in) = a quinol + NAD(+) + 4 H(+)(out). Its function is as follows. NDH-1 shuttles electrons from NADH, via FMN and iron-sulfur (Fe-S) centers, to quinones in the respiratory chain. The immediate electron acceptor for the enzyme in this species is believed to be ubiquinone. Couples the redox reaction to proton translocation (for every two electrons transferred, four hydrogen ions are translocated across the cytoplasmic membrane), and thus conserves the redox energy in a proton gradient. The polypeptide is NADH-quinone oxidoreductase subunit K (Hydrogenobaculum sp. (strain Y04AAS1)).